We begin with the raw amino-acid sequence, 132 residues long: Small ribosomal subunit protein uS11c (132 aa).

This sequence belongs to the universal ribosomal protein uS11 family. In terms of assembly, part of the 30S ribosomal subunit.

It is found in the plastid. The protein resides in the chloroplast. The chain is Small ribosomal subunit protein uS11c from Gnetum parvifolium (Small-leaved jointfir).